The sequence spans 405 residues: Lipase lipl-1 (405 aa).

The signal sequence occupies residues 1 to 20 (MRSWSTVMLAVLATAATVFG). N66 is a glycosylation site (N-linked (GlcNAc...) asparagine). The active-site Nucleophile is the S169. A glycan (N-linked (GlcNAc...) asparagine) is linked at N273. Catalysis depends on charge relay system residues D344 and H376.

This sequence belongs to the AB hydrolase superfamily. Lipase family.

It localises to the secreted. The protein localises to the lysosome lumen. In terms of biological role, lipase that, together with lipl-3, plays a role in the response to nutrient deprivation by controlling lipid metabolism. Specifically, involved in the breakdown of lipids during lipophagy, a process during which lipids contained in lipid droplets that have been delivered to lysosomes by autophagy are degraded. The sequence is that of Lipase lipl-1 from Caenorhabditis elegans.